The sequence spans 2253 residues: Protein Ycf2 (2253 aa).

Position 1600-1607 (1600-1607 (GFIGTGRS)) interacts with ATP.

It belongs to the Ycf2 family.

The protein resides in the plastid. It localises to the chloroplast stroma. Its function is as follows. Probable ATPase of unknown function. Its presence in a non-photosynthetic plant (Epifagus virginiana) and experiments in tobacco indicate that it has an essential function which is probably not related to photosynthesis. The polypeptide is Protein Ycf2 (Nymphaea alba (White water-lily)).